Here is a 225-residue protein sequence, read N- to C-terminus: Probable methylthioribulose-1-phosphate dehydratase (225 aa).

Position 86 (cysteine 86) interacts with substrate. Zn(2+) is bound by residues histidine 104 and histidine 106. Catalysis depends on glutamate 127, which acts as the Proton donor/acceptor. Position 183 (histidine 183) interacts with Zn(2+).

Belongs to the aldolase class II family. MtnB subfamily. Zn(2+) serves as cofactor.

It localises to the cytoplasm. It catalyses the reaction 5-(methylsulfanyl)-D-ribulose 1-phosphate = 5-methylsulfanyl-2,3-dioxopentyl phosphate + H2O. The protein operates within amino-acid biosynthesis; L-methionine biosynthesis via salvage pathway; L-methionine from S-methyl-5-thio-alpha-D-ribose 1-phosphate: step 2/6. Catalyzes the dehydration of methylthioribulose-1-phosphate (MTRu-1-P) into 2,3-diketo-5-methylthiopentyl-1-phosphate (DK-MTP-1-P). This is Probable methylthioribulose-1-phosphate dehydratase from Leishmania infantum.